The primary structure comprises 433 residues: Steroid hormone receptor ERR2 (433 aa).

Residues 1–41 form a disordered region; sequence MSSEDRHLGSSCGSFIKTEPSSPSSGIDALSHHSPSGSSDA. The segment covering 32–41 has biased composition (low complexity); that stretch reads HHSPSGSSDA. An interaction with NANOG region spans residues 93 to 211; sequence YMLNAIPKRL…SPPAKKPLTK (119 aa). The nuclear receptor DNA-binding region spans 100-186; it reads KRLCLVCGDI…RVRGGRQKYK (87 aa). 2 consecutive NR C4-type zinc fingers follow at residues 103–123 and 139–163; these read CLVC…CEAC and CPAT…FMKC. Positions 203–433 are essential for ESRRB transcriptional activity and interaction with NCOA3; that stretch reads PPAKKPLTKI…LFLEMLEAKV (231 aa). Positions 208–432 constitute an NR LBD domain; it reads PLTKIVSYLL…KLFLEMLEAK (225 aa).

The protein belongs to the nuclear hormone receptor family. NR3 subfamily. As to quaternary structure, binds DNA as a monomer. Interacts with NR0B1; represses ESRRB activity at the GATA6 promoter. Interacts with NANOG; reciprocally modulates their transcriptional activities and activates POU5F1 expression. Interacts with NCOA3; mediates the interaction between ESRRB and RNA polymerase II complexes and allows NCOA3 corecruitment to ESRRB, KLF4, NANOG, and SOX2 enhancer regions to trigger ESRRB-dependent gene activation involved in self-renewal and pluripotency. Interacts with KDM1A; co-occupes the core set of ESRRB targets including ELF5 and EOMES. Interacts with the multiprotein complex Integrator, at least composed of INTS1, INTS2, INTS3, INTS4, INTS5, INTS6, INTS7, INTS8, INTS9/RC74, INTS10, INTS11/CPSF3L and INTS12; ESRRB is probably not a core component of the integrator complex and associates to integrator via its interaction with INTS1 and INTS9; attracts the transcriptional machinery. Interacts with JARID2. Interacts with POU5F1; recruits ESRRB near the POU5F1-SOX2 element in the NANOG proximal promoter leading to activation of NANOG expression; the interaction is DNA independent. In terms of processing, acetylated by PCAF/KAT2 (in vitro).

The protein resides in the nucleus. Its subcellular location is the cytoplasm. It is found in the chromosome. In terms of biological role, transcription factor that binds a canonical ESRRB recognition (ERRE) sequence 5'TCAAGGTCA-3' localized on promoter and enhancer of targets genes regulating their expression or their transcription activity. Plays a role, in a LIF independent manner, in maintainance of self-renewal and pluripotency of embryonic and trophoblast stem cells through different signaling pathways including FGF signaling pathway and Wnt signaling pathways. Involved in morula development (2-16 cells embryos) by acting as a regulator at the 8-cell stage. Upon FGF signaling pathway activation, interacts with KDM1A by directly binding to enhancer site of ELF5 and EOMES and activating their transcription leading to self-renewal of trophoblast stem cells. Also regulates expression of multiple rod-specific genes and is required for survival of this cell type. Plays a role as transcription factor activator of GATA6, NR0B1, POU5F1 and PERM1. Plays a role as transcription factor repressor of NFE2L2 transcriptional activity and ESR1 transcriptional activity. During mitosis remains bound to a subset of interphase target genes, including pluripotency regulators, through the canonical ESRRB recognition (ERRE) sequence, leading to their transcriptional activation in early G1 phase. Can coassemble on structured DNA elements with other transcription factors like SOX2, POU5F1, KDM1A and NCOA3 to trigger ESRRB-dependent gene activation. This mechanism, in the case of SOX2 corecruitment prevents the embryonic stem cells (ESCs) to epiblast stem cells (EpiSC) transition through positive regulation of NR0B1 that inhibits the EpiSC transcriptional program. Also plays a role inner ear development by controlling expression of ion channels and transporters and in early placentation. This chain is Steroid hormone receptor ERR2, found in Rattus norvegicus (Rat).